A 301-amino-acid polypeptide reads, in one-letter code: Possible hemolysin C (301 aa).

2 consecutive CBS domains span residues 80-142 and 145-202; these read MVPR…NGRL and LIRK…IDDE.

It belongs to the UPF0053 family. Hemolysin C subfamily.

In Rickettsia akari (strain Hartford), this protein is Possible hemolysin C (tlyC).